The primary structure comprises 181 residues: BURP domain-containing protein 7 (181 aa).

A signal peptide spans 1–21 (MARSLAALLLLLVAAAGDSHA). In terms of domain architecture, BURP spans 65–181 (FFLEKDLFPG…RRGRRTGWRP (117 aa)). The segment at 112–181 (QLSVPAGSPA…RRGRRTGWRP (70 aa)) is disordered. Basic residues predominate over residues 128–143 (RPRRSPARRSNARRRS). Low complexity predominate over residues 144-157 (SPWWSSPRPASAPA). Positions 170–181 (GRRRGRRTGWRP) are enriched in basic residues.

As to expression, expressed in roots, stems, leaves and shoot.

The chain is BURP domain-containing protein 7 (BURP7) from Oryza sativa subsp. japonica (Rice).